The sequence spans 234 residues: Endonuclease NucS (234 aa).

This sequence belongs to the NucS endonuclease family.

It localises to the cytoplasm. In terms of biological role, cleaves both 3' and 5' ssDNA extremities of branched DNA structures. The polypeptide is Endonuclease NucS (Bifidobacterium adolescentis (strain ATCC 15703 / DSM 20083 / NCTC 11814 / E194a)).